A 486-amino-acid polypeptide reads, in one-letter code: Protein DETOXIFICATION 16 (486 aa).

The next 12 membrane-spanning stretches (helical) occupy residues 35–55, 68–88, 117–137, 142–162, 179–199, 207–227, 259–279, 288–308, 331–351, 365–385, 401–421, and 433–453; these read GPLI…VMFV, IATS…ASAL, LASI…VFFG, IATL…AYGL, VVFC…VLVF, GAAL…FCYV, ALMV…SGLL, VLSI…GLSG, RVVI…LILI, VVSY…LDSL, IGAI…GLLL, and WLGI…VTIF.

This sequence belongs to the multi antimicrobial extrusion (MATE) (TC 2.A.66.1) family.

It is found in the membrane. The sequence is that of Protein DETOXIFICATION 16 from Arabidopsis thaliana (Mouse-ear cress).